Consider the following 215-residue polypeptide: Phosphatidylserine decarboxylase proenzyme (215 aa).

S185 (schiff-base intermediate with substrate; via pyruvic acid) is an active-site residue. S185 carries the pyruvic acid (Ser); by autocatalysis modification.

The protein belongs to the phosphatidylserine decarboxylase family. PSD-A subfamily. Heterodimer of a large membrane-associated beta subunit and a small pyruvoyl-containing alpha subunit. Requires pyruvate as cofactor. Is synthesized initially as an inactive proenzyme. Formation of the active enzyme involves a self-maturation process in which the active site pyruvoyl group is generated from an internal serine residue via an autocatalytic post-translational modification. Two non-identical subunits are generated from the proenzyme in this reaction, and the pyruvate is formed at the N-terminus of the alpha chain, which is derived from the carboxyl end of the proenzyme. The post-translation cleavage follows an unusual pathway, termed non-hydrolytic serinolysis, in which the side chain hydroxyl group of the serine supplies its oxygen atom to form the C-terminus of the beta chain, while the remainder of the serine residue undergoes an oxidative deamination to produce ammonia and the pyruvoyl prosthetic group on the alpha chain.

It is found in the cell membrane. The catalysed reaction is a 1,2-diacyl-sn-glycero-3-phospho-L-serine + H(+) = a 1,2-diacyl-sn-glycero-3-phosphoethanolamine + CO2. The protein operates within phospholipid metabolism; phosphatidylethanolamine biosynthesis; phosphatidylethanolamine from CDP-diacylglycerol: step 2/2. Functionally, catalyzes the formation of phosphatidylethanolamine (PtdEtn) from phosphatidylserine (PtdSer). In Streptomyces avermitilis (strain ATCC 31267 / DSM 46492 / JCM 5070 / NBRC 14893 / NCIMB 12804 / NRRL 8165 / MA-4680), this protein is Phosphatidylserine decarboxylase proenzyme.